The sequence spans 48 residues: uncharacterized protein (48 aa).

A helical transmembrane segment spans residues 25–47 (TFASIGVTVGVQIVILLIWGLSW).

Its subcellular location is the membrane. This is an uncharacterized protein from Archaeoglobus fulgidus (strain ATCC 49558 / DSM 4304 / JCM 9628 / NBRC 100126 / VC-16).